The sequence spans 354 residues: Multiple sugar-binding periplasmic receptor ChvE (354 aa).

The N-terminal stretch at 1 to 25 is a signal peptide; the sequence is MKSIISLTAAAAIGVAMFVAPAFAA.

It belongs to the bacterial solute-binding protein 2 family.

It localises to the periplasm. Functionally, required for effective transcriptional induction of the vir genes by monosaccharides in response to plant signals and for normal growth and chemotaxis towards certain sugars. Functions as a periplasmic multiple sugar-binding receptor protein. It does not interact with a transport system. The chain is Multiple sugar-binding periplasmic receptor ChvE (chvE) from Rhizobium radiobacter (Agrobacterium tumefaciens).